The following is a 230-amino-acid chain: Cell division ATP-binding protein FtsE (230 aa).

Residues 3 to 228 (ITLDHVTKQY…RDEQRGVYGM (226 aa)) enclose the ABC transporter domain. An ATP-binding site is contributed by 37 to 44 (GPSGSGKS).

It belongs to the ABC transporter superfamily. Homodimer. Forms a membrane-associated complex with FtsX.

The protein localises to the cell membrane. Functionally, part of the ABC transporter FtsEX involved in cellular division. Has ATPase activity. In Mycobacterium tuberculosis (strain ATCC 25618 / H37Rv), this protein is Cell division ATP-binding protein FtsE.